The following is a 360-amino-acid chain: Coiled-coil domain-containing protein 86 (360 aa).

The segment covering 1–12 (MDTPLRRSRRLG) has biased composition (basic residues). Disordered stretches follow at residues 1–314 (MDTP…ENER) and 328–360 (LKRAKKKQLRSIEKRDTLALLQKQPPQRPAAKI). Ser21, Ser24, Ser47, Ser50, and Ser58 each carry phosphoserine. Residue Thr65 is modified to Phosphothreonine. Phosphoserine is present on residues Ser66, Ser69, Ser80, Ser91, Ser102, Ser110, Ser113, and Ser128. Residues 66-83 (SPGSPRLQQGSGLESPQG) are compositionally biased toward polar residues. Residues 153 to 164 (QLPPVPGSPEPY) are compositionally biased toward pro residues. Residues Ser188, Ser217, and Ser218 each carry the phosphoserine modification. Over residues 238-254 (GKPKSGRVWKDRSKKRF) the composition is skewed to basic residues. A coiled-coil region spans residues 272 to 323 (KERQERKLAKDFARHLEEEKERRRQEKKQRRAENLKRRLENERKAEVVQVIR). Basic and acidic residues-rich tracts occupy residues 273-295 (ERQERKLAKDFARHLEEEKERRR) and 302-314 (RAENLKRRLENER). A Citrulline modification is found at Arg342.

In terms of processing, citrullinated by PADI4.

It localises to the nucleus. Its subcellular location is the chromosome. It is found in the nucleolus. Its function is as follows. Required for proper chromosome segregation during mitosis and error-free mitotic progression. This Pongo abelii (Sumatran orangutan) protein is Coiled-coil domain-containing protein 86.